A 261-amino-acid chain; its full sequence is Hemin import ATP-binding protein HmuV (261 aa).

Positions 8–243 (IRVTDLSYSV…ESIRTAYGHE (236 aa)) constitute an ABC transporter domain. 40–47 (GRNGAGKS) contributes to the ATP binding site.

Belongs to the ABC transporter superfamily. Heme (hemin) importer (TC 3.A.1.14.5) family. In terms of assembly, the complex is composed of two ATP-binding proteins (HmuV), two transmembrane proteins (HmuU) and a solute-binding protein (HmuT).

Its subcellular location is the cell membrane. Part of the ABC transporter complex HmuTUV involved in hemin import. Responsible for energy coupling to the transport system. The polypeptide is Hemin import ATP-binding protein HmuV (Deinococcus radiodurans (strain ATCC 13939 / DSM 20539 / JCM 16871 / CCUG 27074 / LMG 4051 / NBRC 15346 / NCIMB 9279 / VKM B-1422 / R1)).